Consider the following 85-residue polypeptide: Defensin-like protein 76 (85 aa).

The signal sequence occupies residues 1-27 (MQNQKHSHILTAITIVLLFAMAAKINA). Cystine bridges form between cysteine 35-cysteine 70, cysteine 40-cysteine 59, cysteine 44-cysteine 68, and cysteine 48-cysteine 69.

This sequence belongs to the DEFL family.

The protein resides in the secreted. The protein is Defensin-like protein 76 (LCR86) of Arabidopsis thaliana (Mouse-ear cress).